Consider the following 58-residue polypeptide: U8-ctenitoxin-Pr1a (58 aa).

Cystine bridges form between Cys-2–Cys-16, Cys-9–Cys-22, Cys-15–Cys-40, Cys-24–Cys-38, and Cys-48–Cys-55.

Expressed by the venom gland.

The protein localises to the secreted. Functionally, no toxic effects on mice at dose levels of 5 ug per mouse. May be toxic to insects. This is U8-ctenitoxin-Pr1a from Phoneutria reidyi (Brazilian Amazonian armed spider).